The following is a 799-amino-acid chain: Target of rapamycin complex 1 subunit TCO89 (799 aa).

The interval 18 to 41 (NASTVSHQSKPFRQFSTRSRAKSN) is disordered. Phosphothreonine occurs at positions 52 and 82. Ser84, Ser104, Ser107, Ser115, and Ser144 each carry phosphoserine. Residues 97-126 (NQGKRSASFHSPVHNTLLSPKNSSHSNTGT) show a composition bias toward polar residues. Disordered regions lie at residues 97-171 (NQGK…DNIE) and 201-284 (LQSP…ADID). A compositionally biased stretch (basic and acidic residues) spans 147-156 (DAQESKKSES). The segment covering 157–170 (TTDEEVECFSEDNI) has biased composition (acidic residues). 2 positions are modified to phosphoserine: Ser203 and Ser215. The span at 213-224 (DKSGTDGKENHR) shows a compositional bias: basic and acidic residues. A compositionally biased stretch (polar residues) spans 233-243 (LSSNNYFGESS). The span at 244 to 253 (HSIEHQKDGE) shows a compositional bias: basic and acidic residues. Polar residues predominate over residues 254–269 (TSPSSIETKLNATSVI). Phosphoserine is present on Ser290. Residues 324-391 (AHKSNQKPSH…PDDISSAGTK (68 aa)) are disordered. The span at 332-346 (SHSDEQFDQEDHIDA) shows a compositional bias: basic and acidic residues. Residues 348–363 (RSNSSRKSDSSFMSLR) show a composition bias toward low complexity. Residue Ser397 is modified to Phosphoserine. 2 disordered regions span residues 418 to 476 (FENS…QSTF) and 538 to 568 (NKNS…RQSN). Composition is skewed to polar residues over residues 420–429 (NSSSIQNSLG) and 461–476 (GRSQ…QSTF). Ser575 is subject to Phosphoserine. A disordered region spans residues 663-685 (IRKKSHNDAQSIAHSSSDTDHKD). A Phosphoserine modification is found at Ser707.

Belongs to the TORC subunit TCO89 family. As to quaternary structure, the target of rapamycin complex 1 (TORC1) is composed of at least KOG1, LST8, TCO89 and either TOR1 (TORC1-A) or TOR2 (TORC1-B). Interacts with PIB2; following activation of PIB2 by glutamine or cysteine. TORC1 binds to and is inhibited by FKBP-rapamycin.

It is found in the cell membrane. The protein localises to the vacuole membrane. In terms of biological role, component of TORC1, which regulates multiple cellular processes to control cell growth in response to environmental signals. Nutrient limitation and environmental stress signals cause inactivation of TORC1. Active TORC1 positively controls ribosome biogenesis via control of rRNA, ribosomal protein and tRNA gene expression, and rRNA processing. TORC1 positively controls protein biosynthesis by regulation of mRNA stability, translation initiation factor activity, and high-affinity amino acid permeases that serve to provide amino acids for use by the translation machinery. TORC1 also promotes growth by sequestering a number of nutrient and general stress-responsive transcription factors in the cytoplasm. TORC1 negatively controls macroautophagy, a process to recycle surplus cytoplasmic mass under nutrient starvation conditions. The sequence is that of Target of rapamycin complex 1 subunit TCO89 (TCO89) from Saccharomyces cerevisiae (strain ATCC 204508 / S288c) (Baker's yeast).